The following is a 209-amino-acid chain: Mitotic spindle checkpoint protein MAD2 (209 aa).

Positions 15-198 (HGSAAIVSEF…TKIHKVDTLV (184 aa)) constitute an HORMA domain.

It belongs to the MAD2 family. Part of the mitotic checkpoint complex (MCC); interacts with MAD1, CDC20-1, CDC20-2 and CDC20-5. Interacts with BUBR1 at chromocenters and with BUB3.1. Interacts with EIF4B3. As to expression, expressed in actively dividing tissues, early in organ development, in young leaves, lateral root primordia and root meristems.

Its subcellular location is the nucleus. The protein resides in the nucleus envelope. It localises to the chromosome. It is found in the centromere. The protein localises to the kinetochore. Its subcellular location is the cytoplasm. The protein resides in the cytoskeleton. It localises to the spindle. Functionally, required for the execution of the mitotic checkpoint which monitors the process of kinetochore-spindle attachment and delays the onset of anaphase when this process is not complete. It inhibits the activity of the anaphase promoting complex by sequestering CDC20 until all chromosomes are aligned at the metaphase plate. In Arabidopsis thaliana (Mouse-ear cress), this protein is Mitotic spindle checkpoint protein MAD2.